The sequence spans 205 residues: Leucyl/phenylalanyl-tRNA--protein transferase (205 aa).

The protein belongs to the L/F-transferase family.

The protein localises to the cytoplasm. It carries out the reaction N-terminal L-lysyl-[protein] + L-leucyl-tRNA(Leu) = N-terminal L-leucyl-L-lysyl-[protein] + tRNA(Leu) + H(+). It catalyses the reaction N-terminal L-arginyl-[protein] + L-leucyl-tRNA(Leu) = N-terminal L-leucyl-L-arginyl-[protein] + tRNA(Leu) + H(+). The enzyme catalyses L-phenylalanyl-tRNA(Phe) + an N-terminal L-alpha-aminoacyl-[protein] = an N-terminal L-phenylalanyl-L-alpha-aminoacyl-[protein] + tRNA(Phe). Its function is as follows. Functions in the N-end rule pathway of protein degradation where it conjugates Leu, Phe and, less efficiently, Met from aminoacyl-tRNAs to the N-termini of proteins containing an N-terminal arginine or lysine. This is Leucyl/phenylalanyl-tRNA--protein transferase from Mesorhizobium japonicum (strain LMG 29417 / CECT 9101 / MAFF 303099) (Mesorhizobium loti (strain MAFF 303099)).